We begin with the raw amino-acid sequence, 381 residues long: MGPIGAEADENQTVEEMKVEQYGPQTTPRGELVPDPEPELIDSTKLIEVQVVLILAYCSIILLGVIGNSLVIHVVIKFKSMRTVTNFFIANLAVADLLVNTLCLPFTLTYTLMGEWKMGPVLCHLVPYAQGLAVQVSTITLTVIALDRHRCIVYHLESKISKRISFLIIGLAWGISALLASPLAIFREYSLIEIIPDFEIVACTEKWPGEEKSIYGTVYSLSSLLILYVLPLGIISFSYTRIWSKLKNHVSPGAANDHYHQRRQKTTKMLVCVVVVFAVSWLPLHAFQLAVDIDSQVLDLKEYKLIFTVFHIIAMCSTFANPLLYGWMNSNYRKAFLSAFRCEQRLDAIHSEVSVTFKAKKNLEVRKNSGPNDSFTEATNV.

The interval 1–35 (MGPIGAEADENQTVEEMKVEQYGPQTTPRGELVPD) is disordered. Residues 1–51 (MGPIGAEADENQTVEEMKVEQYGPQTTPRGELVPDPEPELIDSTKLIEVQV) are Extracellular-facing. N-linked (GlcNAc...) asparagine glycosylation is present at N11. A helical membrane pass occupies residues 52–72 (VLILAYCSIILLGVIGNSLVI). Over 73-86 (HVVIKFKSMRTVTN) the chain is Cytoplasmic. Residues 87–107 (FFIANLAVADLLVNTLCLPFT) traverse the membrane as a helical segment. Residues 108 to 124 (LTYTLMGEWKMGPVLCH) lie on the Extracellular side of the membrane. Residues C123 and C203 are joined by a disulfide bond. The chain crosses the membrane as a helical span at residues 125–145 (LVPYAQGLAVQVSTITLTVIA). Topologically, residues 146–165 (LDRHRCIVYHLESKISKRIS) are cytoplasmic. Residues 166-186 (FLIIGLAWGISALLASPLAIF) form a helical membrane-spanning segment. The Extracellular portion of the chain corresponds to 187-216 (REYSLIEIIPDFEIVACTEKWPGEEKSIYG). A helical membrane pass occupies residues 217 to 237 (TVYSLSSLLILYVLPLGIISF). Residues 238–268 (SYTRIWSKLKNHVSPGAANDHYHQRRQKTTK) are Cytoplasmic-facing. A helical transmembrane segment spans residues 269–289 (MLVCVVVVFAVSWLPLHAFQL). At 290 to 304 (AVDIDSQVLDLKEYK) the chain is on the extracellular side. A helical membrane pass occupies residues 305–325 (LIFTVFHIIAMCSTFANPLLY). Residues 326 to 381 (GWMNSNYRKAFLSAFRCEQRLDAIHSEVSVTFKAKKNLEVRKNSGPNDSFTEATNV) lie on the Cytoplasmic side of the membrane. Residue C342 is the site of S-palmitoyl cysteine attachment.

This sequence belongs to the G-protein coupled receptor 1 family. High levels in amygdala, corpus callosum, hippocampus and subthalamic nucleus. Also detectable in caudate nucleus, hypothalamus and substantia nigra.

The protein localises to the cell membrane. Functionally, receptor for neuropeptide Y and peptide YY. The rank order of affinity of this receptor for pancreatic polypeptides is PYY &gt; NPY &gt; PYY (3-36) &gt; NPY (2-36) &gt; [Ile-31, Gln-34] PP &gt; [Leu-31, Pro-34] NPY &gt; PP, [Pro-34] PYY and NPY free acid. The sequence is that of Neuropeptide Y receptor type 2 (NPY2R) from Homo sapiens (Human).